The sequence spans 1317 residues: Putative late blight resistance protein homolog R1B-14 (1317 aa).

2 coiled-coil regions span residues 419–442 and 535–556; these read RYSD…ESLQ and RMNE…RLLN. In terms of domain architecture, NB-ARC spans 521-823; it reads TVITHTSSQL…SESFIKSSEG (303 aa). 568 to 575 is an ATP binding site; that stretch reads GMPGLGKT. 6 LRR repeats span residues 944-968, 987-1015, 1090-1114, 1138-1161, 1164-1186, and 1187-1211; these read FKFL…LFYL, LWNL…IWDM, PIRL…ISAP, LKHL…KVSN, FPQL…ADDA, and FPNL…FMDI. The HMA domain maps to 1251-1317; it reads IKKMVLKFDI…VSKLRKRGML (67 aa).

Belongs to the disease resistance NB-LRR family.

The protein resides in the cytoplasm. It localises to the membrane. In terms of biological role, confers resistance to late blight (Phytophthora infestans) races carrying the avirulence gene Avr1. Resistance proteins guard the plant against pathogens that contain an appropriate avirulence protein via an indirect interaction with this avirulence protein. That triggers a defense system including the hypersensitive response, which restricts the pathogen growth. This Solanum demissum (Wild potato) protein is Putative late blight resistance protein homolog R1B-14 (R1B-14).